The following is a 414-amino-acid chain: 3-oxoacyl-[acyl-carrier-protein] synthase 2 (414 aa).

Residues 4–411 (NKRVVITGMG…GHNAVLVFKK (408 aa)) enclose the Ketosynthase family 3 (KS3) domain. Active-site for beta-ketoacyl synthase activity residues include Cys-165, His-304, and His-341.

The protein belongs to the thiolase-like superfamily. Beta-ketoacyl-ACP synthases family.

The enzyme catalyses a fatty acyl-[ACP] + malonyl-[ACP] + H(+) = a 3-oxoacyl-[ACP] + holo-[ACP] + CO2. It carries out the reaction (9Z)-hexadecenoyl-[ACP] + malonyl-[ACP] + H(+) = 3-oxo-(11Z)-octadecenoyl-[ACP] + holo-[ACP] + CO2. It participates in lipid metabolism; fatty acid biosynthesis. Functionally, involved in the type II fatty acid elongation cycle. Catalyzes the elongation of a wide range of acyl-ACP by the addition of two carbons from malonyl-ACP to an acyl acceptor. Can efficiently catalyze the conversion of palmitoleoyl-ACP (cis-hexadec-9-enoyl-ACP) to cis-vaccenoyl-ACP (cis-octadec-11-enoyl-ACP), an essential step in the thermal regulation of fatty acid composition. This is 3-oxoacyl-[acyl-carrier-protein] synthase 2 (fabF) from Staphylococcus aureus (strain MW2).